We begin with the raw amino-acid sequence, 86 residues long: F(1)-ATPase inhibitor STF1, mitochondrial (86 aa).

A mitochondrion-targeting transit peptide spans 1–23 (MLNRCISRNTRLPVNLRIASRFY). Ser-24 bears the Phosphoserine mark.

It belongs to the ATPase inhibitor family. In terms of assembly, monomer and homodimer. Monomeric at pH 5.0 and dimeric at either pH 6.5 or 8.0. The protein aggregates increasingly strongly with increasing pH.

It is found in the mitochondrion. In terms of biological role, endogenous low-affinity ATPase inhibitor, which inhibits specifically the reverse ATPase reaction of mitochondrial F(1)F(0)-type ATP synthase. Found to stabilize, together with STF2, a complex of intrinsic ATPase inhibitor INH1 and proton-translocating ATPase in mitochondrial membranes. Binds directly to purified F1-ATPase. This Saccharomyces cerevisiae (strain ATCC 204508 / S288c) (Baker's yeast) protein is F(1)-ATPase inhibitor STF1, mitochondrial (STF1).